We begin with the raw amino-acid sequence, 551 residues long: Methionine--tRNA ligase (551 aa).

The short motif at 12–22 (PYANGPLHFGH) is the 'HIGH' region element. Cys144, Cys147, Cys157, and Cys160 together coordinate Zn(2+). The short motif at 330 to 334 (QFSKS) is the 'KMSKS' region element. Lys333 serves as a coordination point for ATP.

The protein belongs to the class-I aminoacyl-tRNA synthetase family. MetG type 1 subfamily. As to quaternary structure, monomer. The cofactor is Zn(2+).

It is found in the cytoplasm. It carries out the reaction tRNA(Met) + L-methionine + ATP = L-methionyl-tRNA(Met) + AMP + diphosphate. Is required not only for elongation of protein synthesis but also for the initiation of all mRNA translation through initiator tRNA(fMet) aminoacylation. This Chlamydia pneumoniae (Chlamydophila pneumoniae) protein is Methionine--tRNA ligase (metG).